Here is a 180-residue protein sequence, read N- to C-terminus: Ribulose bisphosphate carboxylase small subunit, chloroplastic 4 (180 aa).

The N-terminal 56 residues, 1–56 (MASSIVSSAAVATRANGAQASMVGPFTGLKSTASFPVSRKQNLDITSIASNGGRVR), are a transit peptide targeting the chloroplast.

It belongs to the RuBisCO small chain family. Heterohexadecamer of 8 large and 8 small subunits.

Its subcellular location is the plastid. It is found in the chloroplast. RuBisCO catalyzes two reactions: the carboxylation of D-ribulose 1,5-bisphosphate, the primary event in carbon dioxide fixation, as well as the oxidative fragmentation of the pentose substrate. Both reactions occur simultaneously and in competition at the same active site. Although the small subunit is not catalytic it is essential for maximal activity. This is Ribulose bisphosphate carboxylase small subunit, chloroplastic 4 from Solanum tuberosum (Potato).